The chain runs to 629 residues: tRNA uridine 5-carboxymethylaminomethyl modification enzyme MnmG (629 aa).

Residues glycine 13–glycine 18, valine 125, and serine 180 each bind FAD. Glycine 273–phenylalanine 287 provides a ligand contact to NAD(+). Glutamine 370 provides a ligand contact to FAD.

Belongs to the MnmG family. Homodimer. Heterotetramer of two MnmE and two MnmG subunits. The cofactor is FAD.

It is found in the cytoplasm. In terms of biological role, NAD-binding protein involved in the addition of a carboxymethylaminomethyl (cmnm) group at the wobble position (U34) of certain tRNAs, forming tRNA-cmnm(5)s(2)U34. The sequence is that of tRNA uridine 5-carboxymethylaminomethyl modification enzyme MnmG from Escherichia coli O157:H7.